Consider the following 417-residue polypeptide: Gamma-glutamyl phosphate reductase (417 aa).

The protein belongs to the gamma-glutamyl phosphate reductase family.

The protein localises to the cytoplasm. It catalyses the reaction L-glutamate 5-semialdehyde + phosphate + NADP(+) = L-glutamyl 5-phosphate + NADPH + H(+). It functions in the pathway amino-acid biosynthesis; L-proline biosynthesis; L-glutamate 5-semialdehyde from L-glutamate: step 2/2. Functionally, catalyzes the NADPH-dependent reduction of L-glutamate 5-phosphate into L-glutamate 5-semialdehyde and phosphate. The product spontaneously undergoes cyclization to form 1-pyrroline-5-carboxylate. This is Gamma-glutamyl phosphate reductase from Serratia proteamaculans (strain 568).